We begin with the raw amino-acid sequence, 314 residues long: Cyclic di-GMP binding protein TDE_0214 (314 aa).

The 89-residue stretch at 146–234 (QKRRNERVVI…KTVRTEPVEG (89 aa)) folds into the PilZ domain. A compositionally biased stretch (polar residues) spans 288–300 (TPVSSPIGTNTAP). The segment at 288–314 (TPVSSPIGTNTAPLTPPPADSAPEQIS) is disordered.

Its function is as follows. Cyclic-di-GMP binding protein that plays important roles in motility, chemotaxis, biofilm formation and virulence. The chain is Cyclic di-GMP binding protein TDE_0214 from Treponema denticola (strain ATCC 35405 / DSM 14222 / CIP 103919 / JCM 8153 / KCTC 15104).